A 253-amino-acid chain; its full sequence is tRNA (guanine-N(1)-)-methyltransferase (253 aa).

S-adenosyl-L-methionine-binding positions include glycine 113 and 133 to 138; that span reads IGDYVL.

The protein belongs to the RNA methyltransferase TrmD family. In terms of assembly, homodimer.

It localises to the cytoplasm. The enzyme catalyses guanosine(37) in tRNA + S-adenosyl-L-methionine = N(1)-methylguanosine(37) in tRNA + S-adenosyl-L-homocysteine + H(+). Specifically methylates guanosine-37 in various tRNAs. In Chloroflexus aurantiacus (strain ATCC 29366 / DSM 635 / J-10-fl), this protein is tRNA (guanine-N(1)-)-methyltransferase.